We begin with the raw amino-acid sequence, 394 residues long: 1-acylglycerol-3-phosphate O-acyltransferase ICT1 (394 aa).

One can recognise an AB hydrolase-1 domain in the interval 74-381; it reads VLIHGYAASS…AGHNLFLDNP (308 aa). The HXXXXD motif signature appears at 374 to 379; it reads HNLFLD.

It belongs to the peptidase S33 family. ABHD4/ABHD5 subfamily.

The enzyme catalyses a 1-acyl-sn-glycero-3-phosphate + an acyl-CoA = a 1,2-diacyl-sn-glycero-3-phosphate + CoA. Its function is as follows. Lysophosphatidic acid acyltransferase involved in membrane remodeling leading to increased organic solvent tolerance. Involved in resistance to azoles and copper. The polypeptide is 1-acylglycerol-3-phosphate O-acyltransferase ICT1 (ICT1) (Saccharomyces cerevisiae (strain ATCC 204508 / S288c) (Baker's yeast)).